We begin with the raw amino-acid sequence, 213 residues long: Octanoyltransferase (213 aa).

One can recognise a BPL/LPL catalytic domain in the interval 36–211; the sequence is TNTPDEIWLV…KFCQQLGFKL (176 aa). Residues 75 to 82, 142 to 144, and 155 to 157 contribute to the substrate site; these read RGGQVTYH, SLG, and GLA. Cys173 acts as the Acyl-thioester intermediate in catalysis.

This sequence belongs to the LipB family.

Its subcellular location is the cytoplasm. It carries out the reaction octanoyl-[ACP] + L-lysyl-[protein] = N(6)-octanoyl-L-lysyl-[protein] + holo-[ACP] + H(+). Its pathway is protein modification; protein lipoylation via endogenous pathway; protein N(6)-(lipoyl)lysine from octanoyl-[acyl-carrier-protein]: step 1/2. Functionally, catalyzes the transfer of endogenously produced octanoic acid from octanoyl-acyl-carrier-protein onto the lipoyl domains of lipoate-dependent enzymes. Lipoyl-ACP can also act as a substrate although octanoyl-ACP is likely to be the physiological substrate. The chain is Octanoyltransferase from Photorhabdus laumondii subsp. laumondii (strain DSM 15139 / CIP 105565 / TT01) (Photorhabdus luminescens subsp. laumondii).